Reading from the N-terminus, the 539-residue chain is Eukaryotic translation initiation factor 3 subunit L (539 aa).

The PCI domain occupies 306 to 514; the sequence is TFSDILLYVQ…IHIADTKVSH (209 aa).

This sequence belongs to the eIF-3 subunit L family. As to quaternary structure, component of the eukaryotic translation initiation factor 3 (eIF-3) complex. The eIF-3 complex interacts with pix.

It localises to the cytoplasm. Functionally, component of the eukaryotic translation initiation factor 3 (eIF-3) complex, which is involved in protein synthesis of a specialized repertoire of mRNAs and, together with other initiation factors, stimulates binding of mRNA and methionyl-tRNAi to the 40S ribosome. The eIF-3 complex specifically targets and initiates translation of a subset of mRNAs involved in cell proliferation. This chain is Eukaryotic translation initiation factor 3 subunit L, found in Drosophila willistoni (Fruit fly).